Reading from the N-terminus, the 687-residue chain is Mediator of RNA polymerase II transcription subunit 17 (687 aa).

Residues 30–43 show a composition bias toward low complexity; the sequence is LSSNPNSSLHSPTS. 2 disordered regions span residues 30–70 and 130–189; these read LSSN…NKTK and QLGS…ETDD. Composition is skewed to basic and acidic residues over residues 56–70, 136–147, and 167–183; these read TSIRLEGDELENKTK, SDGHNSEKKDTD, and KDNPVDSRNETDHKTNE.

Belongs to the Mediator complex subunit 17 family. As to quaternary structure, component of the Mediator complex, which is composed of at least 21 subunits that form three structurally distinct submodules. The Mediator head module contains MED6, MED8, MED11, SRB4/MED17, SRB5/MED18, ROX3/MED19, SRB2/MED20 and SRB6/MED22, the middle module contains MED1, MED4, NUT1/MED5, MED7, CSE2/MED9, NUT2/MED10, SRB7/MED21 and SOH1/MED31, and the tail module contains MED2, PGD1/MED3, RGR1/MED14, GAL11/MED15 and SIN4/MED16. The head and the middle modules interact directly with RNA polymerase II, whereas the elongated tail module interacts with gene-specific regulatory proteins. The head module may also interact with the TFIIF complex. SRB4/MED17 interacts directly with MED6, MED11, ROX3/MED19, SRB2/MED20 and SRB6/MED22. Interacts directly with the activator GAL4.

The protein localises to the nucleus. Functionally, component of the Mediator complex, a coactivator involved in the regulated transcription of nearly all RNA polymerase II-dependent genes. Mediator functions as a bridge to convey information from gene-specific regulatory proteins to the basal RNA polymerase II transcription machinery. The Mediator complex, having a compact conformation in its free form, is recruited to promoters by direct interactions with regulatory proteins and serves for the assembly of a functional preinitiation complex with RNA polymerase II and the general transcription factors. The Mediator complex unfolds to an extended conformation and partially surrounds RNA polymerase II, specifically interacting with the unphosphorylated form of the C-terminal domain (CTD) of RNA polymerase II. The Mediator complex dissociates from the RNA polymerase II holoenzyme and stays at the promoter when transcriptional elongation begins. In Saccharomyces cerevisiae (strain ATCC 204508 / S288c) (Baker's yeast), this protein is Mediator of RNA polymerase II transcription subunit 17 (SRB4).